Here is a 432-residue protein sequence, read N- to C-terminus: tRNA(Ile)-lysidine synthase (432 aa).

19–24 contacts ATP; it reads STGIDS.

This sequence belongs to the tRNA(Ile)-lysidine synthase family.

The protein localises to the cytoplasm. The catalysed reaction is cytidine(34) in tRNA(Ile2) + L-lysine + ATP = lysidine(34) in tRNA(Ile2) + AMP + diphosphate + H(+). Ligates lysine onto the cytidine present at position 34 of the AUA codon-specific tRNA(Ile) that contains the anticodon CAU, in an ATP-dependent manner. Cytidine is converted to lysidine, thus changing the amino acid specificity of the tRNA from methionine to isoleucine. The chain is tRNA(Ile)-lysidine synthase from Staphylococcus epidermidis (strain ATCC 35984 / DSM 28319 / BCRC 17069 / CCUG 31568 / BM 3577 / RP62A).